The sequence spans 868 residues: Thiol protease/hemagglutinin PrtT (868 aa).

The signal sequence occupies residues 1–27 (MKRIFYTLGLLLLCLPMLQAGPVTRSK). Catalysis depends on residues Cys-184 and His-327.

Belongs to the peptidase C10 family.

In terms of biological role, appears to be specific for arginine-containing peptide bonds. Possesses hemagglutinin activity. The polypeptide is Thiol protease/hemagglutinin PrtT (prtT) (Porphyromonas gingivalis (Bacteroides gingivalis)).